The following is a 310-amino-acid chain: Antiviral protein II/III (310 aa).

Positions 1 to 25 (MKMKVLEVVGLAISIWLMLTPPASS) are cleaved as a signal peptide. Intrachain disulfides connect Cys57–Cys284 and Cys106–Cys123. Residue Tyr94 is part of the active site. Active-site residues include Tyr142, Glu197, and Arg200.

This sequence belongs to the ribosome-inactivating protein family. Type 1 RIP subfamily. In terms of tissue distribution, PAP-II is expressed in early summer leaves (at protein level). PAP-III is expressed in late summer leaves (at protein level).

The enzyme catalyses Endohydrolysis of the N-glycosidic bond at one specific adenosine on the 28S rRNA.. Functionally, possesses antiviral potency. Inhibits viral infection of plants (tobacco mosaic virus). Inhibits protein synthesis in both prokaryotes and eukaryotes. This is Antiviral protein II/III (PAP2) from Phytolacca americana (American pokeweed).